The following is a 442-amino-acid chain: Metacaspase-5 (442 aa).

The signal sequence occupies residues 1–18; sequence MDLLLGVLSSGILQNALP. The important for catalytic activity stretch occupies residues 19 to 62; it reads FVAGVGRVKRPKRVKLEEAFREAHLCRPVIPYRAPTPYTGGRVK. N-linked (GlcNAc...) asparagine glycans are attached at residues Asn-69 and Asn-112. His-146 is a catalytic residue. The Ca(2+) site is built by Asp-161, Asp-177, and Asp-178. The active site involves Cys-201. Ca(2+) is bound at residue Asp-208. 4 N-linked (GlcNAc...) asparagine glycosylation sites follow: Asn-234, Asn-257, Asn-282, and Asn-331. A negatively regulates catalytic activity region spans residues 336–442; the sequence is HYVPQQYLQP…QYLSGVGKPL (107 aa). Residues 348–371 show a composition bias toward pro residues; it reads PPQPYYPPPQPQQPYYPPPQPQQP. The interval 348-442 is disordered; that stretch reads PPQPYYPPPQ…QYLSGVGKPL (95 aa). The segment covering 372-382 has biased composition (low complexity); sequence YYPSSQLPTQY. Residues 422–434 show a composition bias toward polar residues; it reads PSDQSTYYSSAQY.

Belongs to the peptidase C14B family. In terms of processing, in epimastigotes, the unprocessed enzyme appears to be the main form. Auto-processing is dispensable for catalytic activity towards small oligopeptide substrates.

It is found in the recycling endosome. With respect to regulation, activated by Ca(2+). Its function is as follows. Cysteine protease that cleaves specifically after arginine or lysine residues. May play a role in apoptosis. The sequence is that of Metacaspase-5 from Trypanosoma cruzi (strain CL Brener).